Here is a 145-residue protein sequence, read N- to C-terminus: MHIYFCGSIRGGRQDVIIYQRIVQTLQKYGEVLTEHVSHSDLSERGEDAVQDGDKFIHDRDMEWLVMSDVIIAEVTQPSLGVGYELGSARGMRKKILCLFRPSSGKSLSAMVRGAVDGSLFQVRDYKEEEVEGILEEYFKGLSKD.

Positions 7, 9, 10, 11, 79, 81, 85, and 109 each coordinate 5-hydroxymethyl-dUMP.

It belongs to the 2'-deoxynucleoside 5'-phosphate N-hydrolase 1 family. Monomer and homodimer.

Its subcellular location is the cytoplasm. The protein localises to the nucleus. It carries out the reaction 5-hydroxymethyl-dUMP + H2O = 5-hydroxymethyluracil + 2-deoxy-D-ribose 5-phosphate. Part of a nucleotide salvage pathway that eliminates epigenetically modified 5-hydroxymethyl-dCMP (hmdCMP) in a two-step process entailing deamination to cytotoxic 5-hydroxymethyl-dUMP (hmdUMP), followed by its hydrolysis into 5-hydroxymethyluracil (hmU) and 2-deoxy-D-ribose 5-phosphate (deoxyribosephosphate). Catalyzes the second step in that pathway, the hydrolysis of the N-glycosidic bond in hmdUMP, degrading this cytotoxic nucleotide to avoid its genomic integration. This chain is 5-hydroxymethyl-dUMP N-hydrolase, found in Esox lucius (Northern pike).